A 172-amino-acid chain; its full sequence is Adenine phosphoribosyltransferase (172 aa).

The protein belongs to the purine/pyrimidine phosphoribosyltransferase family. In terms of assembly, homodimer.

Its subcellular location is the cytoplasm. It carries out the reaction AMP + diphosphate = 5-phospho-alpha-D-ribose 1-diphosphate + adenine. The protein operates within purine metabolism; AMP biosynthesis via salvage pathway; AMP from adenine: step 1/1. Catalyzes a salvage reaction resulting in the formation of AMP, that is energically less costly than de novo synthesis. The polypeptide is Adenine phosphoribosyltransferase (Clostridium kluyveri (strain NBRC 12016)).